The chain runs to 362 residues: Caveolae-associated protein 4 (362 aa).

The disordered stretch occupies residues 1 to 24 (MEHNGSASNAGKIHQNRLSSVTED). A coiled-coil region spans residues 100–120 (IKDVKARVEKQQVRVTKVETK). Phosphoserine is present on residues serine 152, serine 171, and serine 172. Composition is skewed to basic and acidic residues over residues 230-255 (RERL…ERFK), 275-289 (KAKD…VDRG), and 305-320 (HEFH…KEVT). 2 disordered regions span residues 230 to 289 (RERL…VDRG) and 305 to 346 (HEFH…KPQV). Tyrosine 324 is modified (phosphotyrosine). Threonine 334 carries the phosphothreonine modification. Position 353 is a phosphoserine (serine 353).

It belongs to the CAVIN family. As to quaternary structure, component of the CAVIN complex composed of CAVIN1, CAVIN2, CAVIN3 and CAVIN4. Interacts with CAVIN1. Interacts with CAVIN2; this augments the transactivation of NPPA. Interacts with CAV3, ADRA1A, ADRA1B, MAPK1 and MAPK3. As to expression, abundantly expressed in cardiac and skeletal muscle (at protein level). Weaker expression in aorta and lung. In heart, expressed in cardiomyocytes and vascular smooth muscle cells but not in other surrounding cells including vascular endothelial cells.

The protein resides in the cytoplasm. It is found in the myofibril. The protein localises to the sarcomere. It localises to the cytosol. Its subcellular location is the membrane. The protein resides in the caveola. It is found in the cell membrane. The protein localises to the sarcolemma. Modulates the morphology of formed caveolae in cardiomyocytes, but is not required for caveolar formation. Facilitates the recruitment of MAPK1/3 to caveolae within cardiomyocytes and regulates alpha-1 adrenergic receptor-induced hypertrophic responses in cardiomyocytes through MAPK1/3 activation. Contributes to proper membrane localization and stabilization of caveolin-3 (CAV3) in cardiomyocytes. Induces RHOA activation and activates NPPA transcription and myofibrillar organization through the Rho/ROCK signaling pathway. The protein is Caveolae-associated protein 4 (Cavin4) of Mus musculus (Mouse).